A 217-amino-acid chain; its full sequence is Eukaryotic translation initiation factor 4E (217 aa).

A disordered region spans residues 1–27 (MATVEPETTPTPNPPPTEEEKTESNQE). Ala-2 is modified (N-acetylalanine). At Thr-22 the chain carries Phosphothreonine. An EIF4EBP1/2/3 binding region spans residues 37-40 (HPLQ). Residue 56 to 57 (WQ) participates in mRNA binding. The EIF4EBP1/2/3 binding stretch occupies residues 73–77 (WALYN). 102 to 103 (WE) contacts mRNA. The segment at 132–139 (ETVLCLIG) is EIF4EBP1/2/3 binding. Residues 157–162 (RAKGDK) and 205–207 (TKS) each bind mRNA. Ser-209 is modified (phosphoserine; by PKC and MKNK2).

This sequence belongs to the eukaryotic initiation factor 4E family. In terms of assembly, eIF4F is a multi-subunit complex, the composition of which varies with external and internal environmental conditions. It is composed of at least EIF4A, EIF4E and EIF4G1/EIF4G3. EIF4E is also known to interact with other partners. Interacts with EIF4ENIF1/4E-T; promotes recruitment to P-bodies and import into the nucleus. Hypophosphorylated EIF4EBP1, EIF4EBP2 and EIF4EBP3 compete with EIF4G1/EIF4G3 to interact with EIF4E; insulin stimulated MAP-kinase (MAPK1 and MAPK3) phosphorylation of EIF4EBP1 causes dissociation of the complex allowing EIF4G1/EIF4G3 to bind and consequent initiation of translation. Interacts mutually exclusive with EIF4A1 or EIF4A2. Interacts with NGDN and PIWIL2. Component of the CYFIP1-EIF4E-FMR1 complex composed of CYFIP, EIF4E and FMR1. Interacts directly with CYFIP1. Interacts with CLOCK. Binds to MKNK2 in nucleus. Interacts with LIMD1, WTIP and AJUBA. Interacts with APOBEC3G in an RNA-dependent manner. Interacts with LARP1. Interacts with METTL3. Interacts with RBM24; this interaction prevents EIF4E from binding to p53/TP53 mRNA and inhibits the assembly of translation initiation complex. Interacts with DDX3X; interaction is direct and in an RNA-independent manner; this interaction enhances EIF4E cap-binding ability and is required for the repression of cap-dependent translation and the increase of IRES-mediated translation. DDX3X competes with EIF4G1 for interaction with EIF4E. Interacts with EIF4G1; which in a mutual exclusive interaction associates either with EIF1 or with EIF4E on a common binding site. Interacts with BTG4 and CNOT7. Interacts with LRPPRC (via N-terminus); the interaction promotes association of EIF4E with 4ESE-containing mRNAs. Interacts with mRNA cleavage enzyme CPSF3 and its cofactor CPSF1. Interacts (via RING-type zinc finger) with PML; the interaction results in conformational changes of both interacting proteins and reduces EIF4E affinity for the 5' m7G cap of mRNA, thus reducing EIF4E-mediated mRNA nuclear export. Interacts with homeobox protein HHEX/PRH; the interaction inhibits EIF4E-mediated mRNA nuclear export. Interacts with homeobox protein HOXA9; the interaction positively regulates EIF4E-mediated mRNA nuclear export. Interacts with homeobox protein EMX2. Phosphorylation increases the ability of the protein to bind to mRNA caps and to form the eIF4F complex. Phosphorylation also enhances its mRNA transport function. Phosphorylation at Ser-209 is not essential for protein synthesis.

Its subcellular location is the cytoplasm. The protein localises to the P-body. It localises to the stress granule. It is found in the nucleus. The protein resides in the nucleus speckle. Its subcellular location is the nuclear body. Its function is as follows. Acts in the cytoplasm to initiate and regulate protein synthesis and is required in the nucleus for export of a subset of mRNAs from the nucleus to the cytoplasm which promotes processes such as RNA capping, processing and splicing. Component of the protein complex eIF4F, which is involved in the recognition of the mRNA cap, ATP-dependent unwinding of 5'-terminal secondary structure and recruitment of mRNA to the ribosome. This protein recognizes and binds the 7-methylguanosine (m7G)-containing mRNA cap during an early step in the initiation of protein synthesis and facilitates ribosome binding by inducing the unwinding of the mRNAs secondary structures. Together with EIF4G1, antagonizes the scanning promoted by EIF1-EIF4G1 and is required for TISU translation, a process where the TISU element recognition makes scanning unnecessary. In addition to its role in translation initiation, also acts as a regulator of translation and stability in the cytoplasm. Component of the CYFIP1-EIF4E-FMR1 complex which binds to the mRNA cap and mediates translational repression: in the complex, EIF4E mediates the binding to the mRNA cap. Component of a multiprotein complex that sequesters and represses translation of proneurogenic factors during neurogenesis. In P-bodies, component of a complex that mediates the storage of translationally inactive mRNAs in the cytoplasm and prevents their degradation. May play an important role in spermatogenesis through translational regulation of stage-specific mRNAs during germ cell development. As well as its roles in translation, also involved in mRNA nucleocytoplasmic transport. Its role in mRNA export from the nucleus to the cytoplasm relies on its ability to bind the m7G cap of RNAs and on the presence of the 50-nucleotide EIF4E sensitivity element (4ESE) in the 3'UTR of sensitive transcripts. Interaction with the 4ESE is mediated by LRPPRC which binds simultaneously to both EIF4E and the 4ESE, thereby acting as a platform for assembly for the RNA export complex. EIF4E-dependent mRNA export is independent of ongoing protein or RNA synthesis and is also NFX1-independent but is XPO1-dependent with LRPPRC interacting with XPO1 to form an EIF4E-dependent mRNA export complex. Alters the composition of the cytoplasmic face of the nuclear pore to promote RNA export by reducing RANBP2 expression, relocalizing nucleoporin NUP214 and increasing expression of RANBP1 and RNA export factors DDX19 and GLE1. Promotes the nuclear export of cyclin CCND1 mRNA. Promotes the nuclear export of NOS2/iNOS mRNA. Promotes the nuclear export of MDM2 mRNA. Also promotes the export of additional mRNAs, including others involved in the cell cycle. In the nucleus, binds to capped splice factor-encoding mRNAs and stimulates their nuclear export to enhance splice factor production by increasing their cytoplasmic availability to the translation machinery. May also regulate splicing through interaction with the spliceosome in an RNA and m7G cap-dependent manner. Also binds to some pre-mRNAs and may play a role in their recruitment to the spliceosome. Promotes steady-state capping of a subset of coding and non-coding RNAs by mediating nuclear export of capping machinery mRNAs including RNMT, RNGTT and RAMAC to enhance their translation. Stimulates mRNA 3'-end processing by promoting the expression of several core cleavage complex factors required for mRNA cleavage and polyadenylation, and may also have a direct effect through its interaction with the CPSF3 cleavage enzyme. Rescues cells from apoptosis by promoting activation of serine/threonine-protein kinase AKT1 through mRNA export of NBS1 which potentiates AKT1 phosphorylation and also through mRNA export of AKT1 effectors, allowing for increased production of these proteins. In Bos taurus (Bovine), this protein is Eukaryotic translation initiation factor 4E (EIF4E).